A 946-amino-acid chain; its full sequence is C-1-tetrahydrofolate synthase, cytoplasmic (946 aa).

The interval 2–319 (AGQVLDGKAC…PPLPLKLLTP (318 aa)) is methylenetetrahydrofolate dehydrogenase and cyclohydrolase. Residues 51–55 (YVRMK) and 98–100 (VQL) contribute to the substrate site. 169-171 (GRS) is a binding site for NADP(+). At Ser-176 the chain carries Phosphoserine. Position 194 (Ser-194) interacts with NADP(+). 277 to 281 (PGGVG) lines the substrate pocket. Thr-318 is subject to Phosphothreonine. Residues 320 to 946 (VPSDIDISRA…DDDGEIDGLF (627 aa)) are formyltetrahydrofolate synthetase. Residue Ser-322 is modified to Phosphoserine. 384 to 391 (TPLGEGKS) provides a ligand contact to ATP.

This sequence in the N-terminal section; belongs to the tetrahydrofolate dehydrogenase/cyclohydrolase family. It in the C-terminal section; belongs to the formate--tetrahydrofolate ligase family. As to quaternary structure, homodimer.

It localises to the cytoplasm. Its subcellular location is the nucleus. It carries out the reaction (6R)-5,10-methylene-5,6,7,8-tetrahydrofolate + NADP(+) = (6R)-5,10-methenyltetrahydrofolate + NADPH. The catalysed reaction is (6R)-5,10-methenyltetrahydrofolate + H2O = (6R)-10-formyltetrahydrofolate + H(+). The enzyme catalyses (6S)-5,6,7,8-tetrahydrofolate + formate + ATP = (6R)-10-formyltetrahydrofolate + ADP + phosphate. It functions in the pathway one-carbon metabolism; tetrahydrofolate interconversion. In terms of biological role, cytoplasmic isozyme of C-1-tetrahydrofolate synthase. The trifunctional enzyme catalyzes the interconversion of the one-carbon derivatives of tetrahydrofolate (THF) between different oxidation states by the enzymatic activities 10-formyltetrahydrofolate synthetase, 5,lO-methenyltetrahydrofolate cyclohydrolase, and 5,lO-methylenetetrahydrofolate dehydrogenase. Involved in the generation of one-carbon intermediates in the biosynthesis of the purine bases. The sequence is that of C-1-tetrahydrofolate synthase, cytoplasmic (ADE3) from Saccharomyces cerevisiae (strain ATCC 204508 / S288c) (Baker's yeast).